Consider the following 586-residue polypeptide: Dihydroxy-acid dehydratase 2 (586 aa).

Cys68 serves as a coordination point for [2Fe-2S] cluster. Residue Asp100 coordinates Mg(2+). Cys141 contributes to the [2Fe-2S] cluster binding site. Asp142 and Lys143 together coordinate Mg(2+). Position 143 is an N6-carboxylysine (Lys143). Cys213 contributes to the [2Fe-2S] cluster binding site. Residue Glu463 participates in Mg(2+) binding. The Proton acceptor role is filled by Ser489.

It belongs to the IlvD/Edd family. Homodimer. Requires [2Fe-2S] cluster as cofactor. The cofactor is Mg(2+).

The catalysed reaction is (2R)-2,3-dihydroxy-3-methylbutanoate = 3-methyl-2-oxobutanoate + H2O. It catalyses the reaction (2R,3R)-2,3-dihydroxy-3-methylpentanoate = (S)-3-methyl-2-oxopentanoate + H2O. It participates in amino-acid biosynthesis; L-isoleucine biosynthesis; L-isoleucine from 2-oxobutanoate: step 3/4. It functions in the pathway amino-acid biosynthesis; L-valine biosynthesis; L-valine from pyruvate: step 3/4. Functionally, functions in the biosynthesis of branched-chain amino acids. Catalyzes the dehydration of (2R,3R)-2,3-dihydroxy-3-methylpentanoate (2,3-dihydroxy-3-methylvalerate) into 2-oxo-3-methylpentanoate (2-oxo-3-methylvalerate) and of (2R)-2,3-dihydroxy-3-methylbutanoate (2,3-dihydroxyisovalerate) into 2-oxo-3-methylbutanoate (2-oxoisovalerate), the penultimate precursor to L-isoleucine and L-valine, respectively. The chain is Dihydroxy-acid dehydratase 2 from Mesorhizobium japonicum (strain LMG 29417 / CECT 9101 / MAFF 303099) (Mesorhizobium loti (strain MAFF 303099)).